We begin with the raw amino-acid sequence, 301 residues long: UstYa family oxidase phomYd (301 aa).

The segment at 1–26 (MEKFFSPSRHNYADLSPTDVPASEES) is disordered. Residues 47–69 (VLVNRLLAASTVALVMVSLWLGW) traverse the membrane as a helical segment. 2 consecutive short sequence motifs (HXXHC) follow at residues 189 to 194 (THSVHC) and 218 to 222 (HTDHC). Asn275 carries N-linked (GlcNAc...) asparagine glycosylation.

The protein belongs to the ustYa family.

It localises to the membrane. The protein operates within mycotoxin biosynthesis. Functionally, ustYa family oxidase; part of the gene cluster that mediates the biosynthesis of the phomopsins, a group of hexapeptide mycotoxins which infects lupins and causes lupinosis disease in livestock. Within the pathway, phomYd catalyzes the desaturation of the Asp moiety into 2,3-dehydroaspartic acid (dAsp). The pathway starts with the processing of the precursor phomA by several endopeptidases including kexin proteases as well as the cluster-specific S41 family peptidase phomP1 and the oligopeptidase phomG to produce 10 identical copies of the hexapeptide Tyr-Val-Ile-Pro-Ile-Asp. After being excised from the precursor peptide, the core peptides are cyclized and modified post-translationally by enzymes encoded within the gene cluster. The timing and order of proteolysis of the phomA precursor and PTMs are still unknown. Two tyrosinase-like enzymes, phomQ1 and phomQ2, catalyze the chlorination and hydroxylation of Tyr, respectively. PhomYb, is proposed to be involved in the construction of the macrocyclic structure. The other 4 ustYa family proteins may be involved in PTMs that generate the unique structure of phomopsin A. PhomYa is required for the hydroxylation of C-beta of Tyr. PhomYc, phomYd, and phomYe are responsible for the biosynthesis of 2,3-dehydroisoleucine (dIle), 2,3-dehydroaspartic acid (dAsp), and 3,4-dehydroproline (dPro), respectively. While dIle formation by phomYc is indispensable for the installation of dAsp by phomYd, the order of the other PTMs have not been elucidated yet. Most of the biosynthetic enzymes likely have broad substrate specificity, and thus, there might be a metabolic grid from a precursor to phomopsin A. The enzyme(s) responsible for the biosynthesis of 3,4-dehydrovaline (dVal) have also not been identified yet. Finally, phomM acts as an S-adenosylmethionine-dependent alpha-N-methyltransferase that catalyzes two successive N-methylation reactions, converting N-desmethyl-phomopsin A to phomopsin A and phomopsin A further to an N,N-dimethylated congener called phomopsin E. The sequence is that of UstYa family oxidase phomYd from Diaporthe leptostromiformis (Lupinosis disease fungus).